A 1082-amino-acid polypeptide reads, in one-letter code: Probable arabinosyltransferase B (1082 aa).

The next 13 helical transmembrane spans lie at 28–50 (WVAT…LPVT), 223–241 (LAAM…LALW), 262–281 (VTAV…VIGA), 333–352 (SIWI…LLLS), 359–381 (LGPA…LGAW), 420–442 (AITT…AALL), 462–481 (WPLI…VVFA), 522–544 (AISR…FMML), 557–574 (AWRL…LMFT), 578–600 (WTHH…TVLV), 613–635 (AFLS…WWYV), 650–672 (GGVQ…AFWL), and 689–711 (APIP…IGVV).

This sequence belongs to the emb family.

Its subcellular location is the cell membrane. Arabinosyl transferase responsible for the polymerization of arabinose into the arabinan of arabinogalactan. The protein is Probable arabinosyltransferase B (embB) of Mycolicibacterium smegmatis (Mycobacterium smegmatis).